We begin with the raw amino-acid sequence, 226 residues long: Phosphoribosylformylglycinamidine synthase subunit PurQ (226 aa).

In terms of domain architecture, Glutamine amidotransferase type-1 spans 3-225; it reads FAVIVFPGSN…VKWGARHVTY (223 aa). Cys-86 functions as the Nucleophile in the catalytic mechanism. Residues His-194 and Glu-196 contribute to the active site.

As to quaternary structure, part of the FGAM synthase complex composed of 1 PurL, 1 PurQ and 2 PurS subunits.

It localises to the cytoplasm. It catalyses the reaction N(2)-formyl-N(1)-(5-phospho-beta-D-ribosyl)glycinamide + L-glutamine + ATP + H2O = 2-formamido-N(1)-(5-O-phospho-beta-D-ribosyl)acetamidine + L-glutamate + ADP + phosphate + H(+). The enzyme catalyses L-glutamine + H2O = L-glutamate + NH4(+). It participates in purine metabolism; IMP biosynthesis via de novo pathway; 5-amino-1-(5-phospho-D-ribosyl)imidazole from N(2)-formyl-N(1)-(5-phospho-D-ribosyl)glycinamide: step 1/2. Its function is as follows. Part of the phosphoribosylformylglycinamidine synthase complex involved in the purines biosynthetic pathway. Catalyzes the ATP-dependent conversion of formylglycinamide ribonucleotide (FGAR) and glutamine to yield formylglycinamidine ribonucleotide (FGAM) and glutamate. The FGAM synthase complex is composed of three subunits. PurQ produces an ammonia molecule by converting glutamine to glutamate. PurL transfers the ammonia molecule to FGAR to form FGAM in an ATP-dependent manner. PurS interacts with PurQ and PurL and is thought to assist in the transfer of the ammonia molecule from PurQ to PurL. This chain is Phosphoribosylformylglycinamidine synthase subunit PurQ, found in Exiguobacterium sp. (strain ATCC BAA-1283 / AT1b).